The chain runs to 304 residues: MAVSVKRLINDFDLEVLVEGNEDIKIEVNDVNRPGLQLAGFYNYFAPERIQIIGKAEWSFLQDMQIEVRKKRVKKYLSFNITCLIISRDLEPHEEFIKEARKNNIWVLRSKSVTTKLISKITLYLADKLAPETRLHGVLVDVSGIGILITGESGIGKSETALELIKRGHRLITDDAVDIRESDGTLIGSSPKITIGMLEVRGIGIIDVTQLYGLSSVLEEKEIKLIMHFEHWKDDNDYDRLGIDNQYMDILGIPVKKLTVPVRPGRNIAVIIEAAAVNYRYSLMSKISPVDIIENRMSAVSDEA.

Catalysis depends on residues histidine 136 and lysine 157. 151 to 158 contacts ATP; the sequence is GESGIGKS. Mg(2+) is bound at residue serine 158. Aspartate 175 acts as the Proton acceptor; for phosphorylation activity. Proton donor; for dephosphorylation activity in catalysis. An important for the catalytic mechanism of both phosphorylation and dephosphorylation region spans residues 198–207; the sequence is LEVRGIGIID. Glutamate 199 lines the Mg(2+) pocket. Arginine 240 is a catalytic residue. Residues 261–266 form an important for the catalytic mechanism of dephosphorylation region; that stretch reads PVRPGR.

Belongs to the HPrK/P family. In terms of assembly, homohexamer. Requires Mg(2+) as cofactor.

The catalysed reaction is [HPr protein]-L-serine + ATP = [HPr protein]-O-phospho-L-serine + ADP + H(+). The enzyme catalyses [HPr protein]-O-phospho-L-serine + phosphate + H(+) = [HPr protein]-L-serine + diphosphate. Catalyzes the ATP- as well as the pyrophosphate-dependent phosphorylation of a specific serine residue in HPr, a phosphocarrier protein of the phosphoenolpyruvate-dependent sugar phosphotransferase system (PTS). HprK/P also catalyzes the pyrophosphate-producing, inorganic phosphate-dependent dephosphorylation (phosphorolysis) of seryl-phosphorylated HPr (P-Ser-HPr). The two antagonistic activities of HprK/P are regulated by several intracellular metabolites, which change their concentration in response to the absence or presence of rapidly metabolisable carbon sources (glucose, fructose, etc.) in the growth medium. Therefore, by controlling the phosphorylation state of HPr, HPrK/P is a sensor enzyme that plays a major role in the regulation of carbon metabolism and sugar transport: it mediates carbon catabolite repression (CCR), and regulates PTS-catalyzed carbohydrate uptake and inducer exclusion. In Clostridium botulinum (strain Eklund 17B / Type B), this protein is HPr kinase/phosphorylase.